Here is an 85-residue protein sequence, read N- to C-terminus: N.vectensis toxin 1 5 (85 aa).

A signal peptide spans 1–20 (MASFKIVIVCLALLVAVACA). The propeptide occupies 21–36 (RRRDMMSDDELDFHLS). Cystine bridges form between cysteine 42–cysteine 82, cysteine 44–cysteine 72, and cysteine 65–cysteine 83.

This sequence belongs to the sea anemone sodium channel inhibitory toxin family. Type II subfamily. Expressed in ectodermal glands and in clumps outside of the extodermal layer. Is not expressed in nematocytes. In adult female tissues, shows similar expression levels in mesenteries (gametes-producing tissue), tentacles, pharynx and physa.

It is found in the secreted. Binds to site 3 of voltage-gated sodium channels and inhibits the inactivation process. Is highly active on DmNav1/TipE (drosophila) and is only extremely weakly active on rat Nav1.4-beta-1/SCN4A-SCN1B, and on human Nav1.5-beta-1/SCN5A-beta-1. This reveals high specificity for arthropod over mammalian channels. In vivo, when released into the medium, this recombinant toxin induces impaired swimming, paralysis and death of the crustacean A.nauplii within several hours. Also causes paralysis of cherry shrimps immediately after injection at very low doses. Its effect on zebrafish (D.rerio) larvae is also rapid, since it induces tail twitching accompanied by impaired swimming after 20 minutes and complete paralysis within 45 minutes. It has also been observed to cause death of zebrafish larvae within 1 hour. This Nematostella vectensis (Starlet sea anemone) protein is N.vectensis toxin 1 5.